The chain runs to 205 residues: RPW8-like protein 2 (205 aa).

The RPW8 domain occupies 1 to 153 (MPLTEIIAGA…IMGQPIDCII (153 aa)). The helical transmembrane segment at 7 to 23 (IAGAALGLALQILHEAI) threads the bilayer. 2 coiled-coil regions span residues 70–92 (EDLK…LKRR) and 125–147 (ADIK…IMGQ).

This sequence belongs to the plant RPW8 protein family.

The protein localises to the membrane. In terms of biological role, probable disease resistance (R) protein. The sequence is that of RPW8-like protein 2 from Arabidopsis thaliana (Mouse-ear cress).